The following is a 396-amino-acid chain: Elongation factor Tu (396 aa).

The region spanning 10–206 (KPHVNVGTIG…ALDTYIPTPE (197 aa)) is the tr-type G domain. Positions 19–26 (GHVDHGKT) are G1. 19–26 (GHVDHGKT) provides a ligand contact to GTP. Residue T26 participates in Mg(2+) binding. The segment at 60 to 64 (GITIN) is G2. Residues 81–84 (DCPG) are G3. Residues 81-85 (DCPGH) and 136-139 (NKCD) contribute to the GTP site. The tract at residues 136 to 139 (NKCD) is G4. Residues 174-176 (SAK) are G5.

This sequence belongs to the TRAFAC class translation factor GTPase superfamily. Classic translation factor GTPase family. EF-Tu/EF-1A subfamily. Monomer.

Its subcellular location is the cytoplasm. The catalysed reaction is GTP + H2O = GDP + phosphate + H(+). In terms of biological role, GTP hydrolase that promotes the GTP-dependent binding of aminoacyl-tRNA to the A-site of ribosomes during protein biosynthesis. The sequence is that of Elongation factor Tu from Polynucleobacter asymbioticus (strain DSM 18221 / CIP 109841 / QLW-P1DMWA-1) (Polynucleobacter necessarius subsp. asymbioticus).